We begin with the raw amino-acid sequence, 665 residues long: Coiled-coil domain-containing protein 138 (665 aa).

At Thr48 the chain carries Phosphothreonine. Ser49 is subject to Phosphoserine. Residues 198–323 are a coiled coil; that stretch reads QQKFAEELQK…YEFMTIQRLK (126 aa). Ser469 carries the phosphoserine modification.

This Homo sapiens (Human) protein is Coiled-coil domain-containing protein 138 (CCDC138).